Here is a 585-residue protein sequence, read N- to C-terminus: Eukaryotic translation initiation factor 3 subunit D (585 aa).

A compositionally biased stretch (gly residues) spans 110-130 (GGGTVFRGRGQRGVGQRGGRA). The tract at residues 110 to 152 (GGGTVFRGRGQRGVGQRGGRAGFQRVGAGRGQGGDRYYDNRSA) is disordered. Residues 300 to 314 (SIDLVTVNENAADAP) are RNA gate. The disordered stretch occupies residues 560-585 (VPPNTFEEDDEAAEEQEEKAEDESEE). Over residues 565–585 (FEEDDEAAEEQEEKAEDESEE) the composition is skewed to acidic residues.

It belongs to the eIF-3 subunit D family. Component of the eukaryotic translation initiation factor 3 (eIF-3) complex.

Its subcellular location is the cytoplasm. Functionally, mRNA cap-binding component of the eukaryotic translation initiation factor 3 (eIF-3) complex, which is involved in protein synthesis of a specialized repertoire of mRNAs and, together with other initiation factors, stimulates binding of mRNA and methionyl-tRNAi to the 40S ribosome. The eIF-3 complex specifically targets and initiates translation of a subset of mRNAs involved in cell proliferation. In the eIF-3 complex, eif3d specifically recognizes and binds the 7-methylguanosine cap of a subset of mRNAs. This is Eukaryotic translation initiation factor 3 subunit D from Aspergillus fumigatus (strain CBS 144.89 / FGSC A1163 / CEA10) (Neosartorya fumigata).